Reading from the N-terminus, the 316-residue chain is Pantothenate kinase (316 aa).

ATP is bound at residue 95 to 102 (GSVAVGKS).

This sequence belongs to the prokaryotic pantothenate kinase family.

The protein localises to the cytoplasm. It carries out the reaction (R)-pantothenate + ATP = (R)-4'-phosphopantothenate + ADP + H(+). The protein operates within cofactor biosynthesis; coenzyme A biosynthesis; CoA from (R)-pantothenate: step 1/5. The chain is Pantothenate kinase from Shewanella putrefaciens (strain CN-32 / ATCC BAA-453).